A 223-amino-acid polypeptide reads, in one-letter code: Putative thymidylate synthase (223 aa).

Cys146 is a catalytic residue.

It belongs to the thymidylate synthase family. Archaeal-type ThyA subfamily. As to quaternary structure, monomer.

The protein resides in the cytoplasm. It functions in the pathway pyrimidine metabolism; dTTP biosynthesis. In terms of biological role, may catalyze the biosynthesis of dTMP using an unknown cosubstrate. In vitro, also catalyzes the dehalogenation of 5-bromo-deoxyuridine monophosphate (Br-dUMP) and the tritium exchange of [5-3H]deoxyuridine monophosphate ([5-3H]dUMP). This Methanothermobacter marburgensis (strain ATCC BAA-927 / DSM 2133 / JCM 14651 / NBRC 100331 / OCM 82 / Marburg) (Methanobacterium thermoautotrophicum) protein is Putative thymidylate synthase (thyA).